The primary structure comprises 241 residues: General transcription factor IIF subunit 2 (241 aa).

The protein belongs to the TFIIF beta subunit family. As to quaternary structure, heterodimer of an alpha and a beta subunit.

The protein localises to the nucleus. Functionally, TFIIF is a general transcription initiation factor that binds to RNA polymerase II and helps to recruit it to the initiation complex in collaboration with TFIIB. The chain is General transcription factor IIF subunit 2 (gtf2f2) from Dictyostelium discoideum (Social amoeba).